A 439-amino-acid chain; its full sequence is GTPase Obg (439 aa).

An Obg domain is found at 4–162 (IEFIDVVDIY…KHIQLELKLL (159 aa)). An OBG-type G domain is found at 163 to 336 (ADVGLIGYPN…LKYAMWDIIK (174 aa)). GTP contacts are provided by residues 169-176 (GYPNVGKS), 194-198 (FTTLV), 218-221 (DIPG), 288-291 (NKSD), and 317-319 (SAV). The Mg(2+) site is built by Ser-176 and Thr-196. The 79-residue stretch at 361-439 (LVLPDRVDIK…VEGVDFIFKE (79 aa)) folds into the OCT domain.

This sequence belongs to the TRAFAC class OBG-HflX-like GTPase superfamily. OBG GTPase family. In terms of assembly, monomer. Mg(2+) serves as cofactor.

The protein localises to the cytoplasm. Functionally, an essential GTPase which binds GTP, GDP and possibly (p)ppGpp with moderate affinity, with high nucleotide exchange rates and a fairly low GTP hydrolysis rate. Plays a role in control of the cell cycle, stress response, ribosome biogenesis and in those bacteria that undergo differentiation, in morphogenesis control. This chain is GTPase Obg, found in Fervidobacterium nodosum (strain ATCC 35602 / DSM 5306 / Rt17-B1).